The chain runs to 557 residues: MDFKKTIFWAAFSMSGLMLYNNWQVHEGKPSLFGGAPASAPAVADKATTNNKVDVPTQISGAPSVAATPIINGGAIESAEKFTLQNDVLVLEISASGANVIDAKLLKSLTAENKPVELFQYTPTHKYFARSGLVSLNNNDLPNHTSTFKLVQSGKDGSGRPFAVFASERNGVRLEKTFILNPGSYVVDVGHRVTQSTSNPNPLVLYTEIVRDASQEQKIGPFGGAFSANTFTGPVAYTDKEKFNKLEFSAIDKNKITIPTLVAAGEPAWIAMVQHYFASAWIPGDKVARDIYTGRIDNGLYRIGMQTPLGMVGPGSTVVEKAKLFVGPQEERVLETIAPGFELLKDYGYLTILAKPIFWLLDNIHFYVGNWGWSIILLTILIKLVFFPLSAASYKSMARMKEVQPRLVAMKEQYKGEPQKLNQAMMEMYRKEKINPLGGCLPVVIQIPVFISLYWVLLSSVETRGAPWILWIHDLSVPDPYYILPVIMAVSMFVQTKLNPTPPDPIQAKVMMYMPIVFSVMFFFFPAGLVLYWVVNNLLSIAQQWQINQMFGKKPAK.

Helical transmembrane passes span 371 to 391, 437 to 457, and 515 to 535; these read WGWS…PLSA, LGGC…YWVL, and PIVF…YWVV.

It belongs to the OXA1/ALB3/YidC family. Type 1 subfamily. Interacts with the Sec translocase complex via SecD. Specifically interacts with transmembrane segments of nascent integral membrane proteins during membrane integration.

Its subcellular location is the cell inner membrane. Required for the insertion and/or proper folding and/or complex formation of integral membrane proteins into the membrane. Involved in integration of membrane proteins that insert both dependently and independently of the Sec translocase complex, as well as at least some lipoproteins. Aids folding of multispanning membrane proteins. In Polynucleobacter necessarius subsp. necessarius (strain STIR1), this protein is Membrane protein insertase YidC.